Reading from the N-terminus, the 544-residue chain is Chaperonin GroEL (544 aa).

Residues 30–33 (TLGP), Lys-51, 87–91 (DGTTT), Gly-415, and Asp-495 contribute to the ATP site.

It belongs to the chaperonin (HSP60) family. As to quaternary structure, forms a cylinder of 14 subunits composed of two heptameric rings stacked back-to-back. Interacts with the co-chaperonin GroES.

The protein localises to the cytoplasm. It catalyses the reaction ATP + H2O + a folded polypeptide = ADP + phosphate + an unfolded polypeptide.. In terms of biological role, together with its co-chaperonin GroES, plays an essential role in assisting protein folding. The GroEL-GroES system forms a nano-cage that allows encapsulation of the non-native substrate proteins and provides a physical environment optimized to promote and accelerate protein folding. In Neisseria gonorrhoeae (strain ATCC 700825 / FA 1090), this protein is Chaperonin GroEL.